A 123-amino-acid polypeptide reads, in one-letter code: Probable prefoldin subunit 4 (123 aa).

Belongs to the prefoldin subunit beta family. In terms of assembly, heterohexamer of two PFD-alpha type and four PFD-beta type subunits.

In terms of biological role, binds specifically to cytosolic chaperonin (c-CPN) and transfers target proteins to it. Binds to nascent polypeptide chain and promotes folding in an environment in which there are many competing pathways for nonnative proteins. The protein is Probable prefoldin subunit 4 of Schizosaccharomyces pombe (strain 972 / ATCC 24843) (Fission yeast).